A 327-amino-acid chain; its full sequence is PDZ and LIM domain protein 1 (327 aa).

T2 carries the N-acetylthreonine modification. The PDZ domain maps to 3 to 85 (TQQIVLQGPG…NMTLTVSRSE (83 aa)). A phosphoserine mark is found at S90 and S130. Phosphotyrosine is present on Y142. Residues 161-186 (VESKTSASGEEANSRPSAQPHPSGGL) are disordered. Residues 256–315 (PICDKCGTGIVGVFVKLRDHHRHPECYVCTDCGINLKQKGHFFVGDQIYCEKHARERVTP) form the LIM zinc-binding domain. Zn(2+) is bound by residues C258, C261, H278, C281, C284, C287, C305, and H308. At T314 the chain carries Phosphothreonine. Y319 carries the phosphotyrosine modification.

In terms of assembly, interacts with ACTN1. Interacts with ACTN2 and ACTN4. Interacts with PDLIM4. In terms of tissue distribution, expressed most abundantly in heart, lung and liver, moderately in spleen and skeletal muscle, and at extremely low levels (if at all) in testis and brain tissues.

The protein resides in the cytoplasm. The protein localises to the cytoskeleton. Its subcellular location is the myofibril. It localises to the sarcomere. It is found in the z line. Its function is as follows. Cytoskeletal protein that may act as an adapter that brings other proteins (like kinases) to the cytoskeleton. Involved in assembly, disassembly and directioning of stress fibers in fibroblasts. Required for the localization of ACTN1 and PALLD to stress fibers. Required for cell migration and in maintaining cell polarity of fibroblasts. This is PDZ and LIM domain protein 1 (Pdlim1) from Rattus norvegicus (Rat).